Consider the following 216-residue polypeptide: Ribonuclease HII (216 aa).

In terms of domain architecture, RNase H type-2 spans 33–216; sequence WPVAGADEAG…RMSFRPFRQV (184 aa). A divalent metal cation is bound by residues Asp39, Glu40, and Asp130.

The protein belongs to the RNase HII family. The cofactor is Mn(2+). Mg(2+) is required as a cofactor.

It is found in the cytoplasm. It catalyses the reaction Endonucleolytic cleavage to 5'-phosphomonoester.. Endonuclease that specifically degrades the RNA of RNA-DNA hybrids. This chain is Ribonuclease HII, found in Rhizobium meliloti (strain 1021) (Ensifer meliloti).